We begin with the raw amino-acid sequence, 110 residues long: MALSNILLFKIEFYIFSSLLMIKKKLVFSILKLLQLTEKDSKILVNESLTNKNFSKLIEFLDNYKVEKAKSITLQQLQSVLQNIKLNNSQKSEIIENIYSKLDAANHLIF.

It localises to the plastid. Its subcellular location is the chloroplast. This is an uncharacterized protein from Auxenochlorella pyrenoidosa (Freshwater green alga).